Consider the following 150-residue polypeptide: Large ribosomal subunit protein bL9 (150 aa).

This sequence belongs to the bacterial ribosomal protein bL9 family.

In terms of biological role, binds to the 23S rRNA. The sequence is that of Large ribosomal subunit protein bL9 from Streptococcus pyogenes serotype M5 (strain Manfredo).